The following is a 273-amino-acid chain: Putative phosphoenolpyruvate synthase regulatory protein (273 aa).

153–160 contributes to the ADP binding site; the sequence is GVSRCGKT.

Belongs to the pyruvate, phosphate/water dikinase regulatory protein family. PSRP subfamily.

The enzyme catalyses [pyruvate, water dikinase] + ADP = [pyruvate, water dikinase]-phosphate + AMP + H(+). The catalysed reaction is [pyruvate, water dikinase]-phosphate + phosphate + H(+) = [pyruvate, water dikinase] + diphosphate. Functionally, bifunctional serine/threonine kinase and phosphorylase involved in the regulation of the phosphoenolpyruvate synthase (PEPS) by catalyzing its phosphorylation/dephosphorylation. In Yersinia enterocolitica serotype O:8 / biotype 1B (strain NCTC 13174 / 8081), this protein is Putative phosphoenolpyruvate synthase regulatory protein.